A 235-amino-acid polypeptide reads, in one-letter code: Geranylgeranylglyceryl phosphate synthase (235 aa).

Sn-glycerol 1-phosphate is bound at residue lysine 13. 2 residues coordinate Mg(2+): aspartate 15 and threonine 42. Sn-glycerol 1-phosphate is bound by residues 162–167 (YVEYSG), glycine 192, and 212–213 (GD).

This sequence belongs to the GGGP/HepGP synthase family. Group I subfamily. It depends on Mg(2+) as a cofactor.

The protein resides in the cytoplasm. It catalyses the reaction sn-glycerol 1-phosphate + (2E,6E,10E)-geranylgeranyl diphosphate = sn-3-O-(geranylgeranyl)glycerol 1-phosphate + diphosphate. The protein operates within membrane lipid metabolism; glycerophospholipid metabolism. In terms of biological role, prenyltransferase that catalyzes the transfer of the geranylgeranyl moiety of geranylgeranyl diphosphate (GGPP) to the C3 hydroxyl of sn-glycerol-1-phosphate (G1P). This reaction is the first ether-bond-formation step in the biosynthesis of archaeal membrane lipids. The protein is Geranylgeranylglyceryl phosphate synthase of Natronomonas pharaonis (strain ATCC 35678 / DSM 2160 / CIP 103997 / JCM 8858 / NBRC 14720 / NCIMB 2260 / Gabara) (Halobacterium pharaonis).